Reading from the N-terminus, the 673-residue chain is Sodium/myo-inositol cotransporter 2 (673 aa).

The Extracellular segment spans residues 1 to 27 (MESTTSSPQPPPSDALEAFPQKSMEPA). Residues 28–48 (DIVVLVLYFLFVLAVGLWSTV) form a helical membrane-spanning segment. The Cytoplasmic portion of the chain corresponds to 49-56 (RTKRDTVK). A helical transmembrane segment spans residues 57–77 (GYFLAGGDMVWWPVGASLFAS). Position 78 (Asn-78) is a topological domain, extracellular. Residues 79 to 99 (VGSGHFIGLAGSGAAVGISVA) traverse the membrane as a helical segment. Residues 100–102 (AYE) are Cytoplasmic-facing. Residues 103 to 123 (LNGLFSVLMLAWIFLPIYIAG) traverse the membrane as a helical segment. Over 124-180 (QVTTMPEYLKRRFGGSRIPITLASIYPSTHSLTILQVDMYAGAIFIQQSLHLDLYLA) the chain is Extracellular. A helical transmembrane segment spans residues 181–201 (IVGLLAVTALYTVAGGLAAVI). The Cytoplasmic portion of the chain corresponds to 202-208 (YTDALQT). A helical membrane pass occupies residues 209–229 (VIMLIGAFILMGYSFAAVGGM). At 230 to 272 (EGLKDQYFLALASNRSENSSCGLPREDAFHIFRDPLTSDLPWP) the chain is on the extracellular side. Residues 273 to 293 (GILFGMSIPSLWYWCTDQVIV) traverse the membrane as a helical segment. Topologically, residues 294-308 (QRSLAAKNLSHAKGG) are cytoplasmic. The helical transmembrane segment at 309–329 (SLMAAYLKVLPLFLMVFPGMV) threads the bilayer. The Extracellular portion of the chain corresponds to 330 to 375 (SRILFPDQVACAHPDICQRVCSNPSGCSDIAYPKLVLELLPTGLRG). The chain crosses the membrane as a helical span at residues 376 to 396 (LMMAVMVAALMSSLTSIFNSA). Topologically, residues 397 to 418 (STIFTMDLWHHIRPRASERELM) are cytoplasmic. A helical membrane pass occupies residues 419-439 (IVGRVFVLALVLVSILWIPVV). Topologically, residues 440–446 (QASQGGQ) are extracellular. A helical membrane pass occupies residues 447–467 (LFIYIQSISSYLQPPVAVVFI). At 468–479 (MGCFWKRTNEKG) the chain is on the cytoplasmic side. Residues 480–500 (AFSGLILGLLLGLVRLILDFV) form a helical membrane-spanning segment. Residues 501 to 521 (YVQPRCDQPDDRPAVVKDVHY) are Extracellular-facing. The helical transmembrane segment at 522 to 542 (LYFSMILSSTTLITVFTVSWF) threads the bilayer. The Cytoplasmic portion of the chain corresponds to 543-652 (TETPSKEMVS…SLEENPLVKT (110 aa)). A helical membrane pass occupies residues 653–673 (LLDVNCIVCISCAIFLWGYFA).

Belongs to the sodium:solute symporter (SSF) (TC 2.A.21) family. In terms of tissue distribution, expressed in kidney and small intestine.

It localises to the membrane. The protein resides in the apical cell membrane. The enzyme catalyses myo-inositol(out) + 2 Na(+)(out) = myo-inositol(in) + 2 Na(+)(in). It catalyses the reaction 1D-chiro-inositol(out) + 2 Na(+)(out) = 1D-chiro-inositol(in) + 2 Na(+)(in). It carries out the reaction D-glucose(out) + 2 Na(+)(out) = D-glucose(in) + 2 Na(+)(in). The catalysed reaction is D-xylose(out) + 2 Na(+)(out) = D-xylose(in) + 2 Na(+)(in). Its activity is regulated as follows. MI transport activity inhibited by D-chiro-inositol (DCI), phlorizin (Pz) and sodium (Na(+)). Insulin increases D-chiro-inositol uptake. Functionally, involved in the sodium-dependent cotransport of myo-inositol (MI) with a Na(+):MI stoichiometry of 2:1. Exclusively responsible for apical MI transport and absorption in intestine. Can also transport D-chiro-inositol (DCI) but not L-fucose. Exhibits stereospecific cotransport of both D-glucose and D-xylose. May induce apoptosis through the TNF-alpha, PDCD1 pathway. May play a role in the regulation of MI concentration in serum, involving reabsorption in at least the proximal tubule of the kidney. The chain is Sodium/myo-inositol cotransporter 2 from Rattus norvegicus (Rat).